Reading from the N-terminus, the 266-residue chain is Indole-3-glycerol phosphate synthase (266 aa).

The protein belongs to the TrpC family.

The catalysed reaction is 1-(2-carboxyphenylamino)-1-deoxy-D-ribulose 5-phosphate + H(+) = (1S,2R)-1-C-(indol-3-yl)glycerol 3-phosphate + CO2 + H2O. The protein operates within amino-acid biosynthesis; L-tryptophan biosynthesis; L-tryptophan from chorismate: step 4/5. The sequence is that of Indole-3-glycerol phosphate synthase from Opitutus terrae (strain DSM 11246 / JCM 15787 / PB90-1).